The primary structure comprises 445 residues: Phosphoglucosamine mutase (445 aa).

Residue Ser-101 is the Phosphoserine intermediate of the active site. Residues Ser-101, Asp-240, Asp-242, and Asp-244 each contribute to the Mg(2+) site. Ser-101 carries the post-translational modification Phosphoserine.

This sequence belongs to the phosphohexose mutase family. Requires Mg(2+) as cofactor. Post-translationally, activated by phosphorylation.

It carries out the reaction alpha-D-glucosamine 1-phosphate = D-glucosamine 6-phosphate. Functionally, catalyzes the conversion of glucosamine-6-phosphate to glucosamine-1-phosphate. The protein is Phosphoglucosamine mutase of Pseudomonas aeruginosa (strain LESB58).